We begin with the raw amino-acid sequence, 232 residues long: Putative homeobox protein NANOG2 (232 aa).

Over residues 1 to 10 (MDLPIEDSHD) the composition is skewed to basic and acidic residues. A disordered region spans residues 1-39 (MDLPIEDSHDSSTSPKGKQPTTAEKSATKKEDKVPVKKQ). Residues 11 to 25 (SSTSPKGKQPTTAEK) show a composition bias toward polar residues. Residues 26–35 (SATKKEDKVP) show a composition bias toward basic and acidic residues. 8 tandem repeats follow at residues 123-127 (WSNQT), 128-132 (WNNSI), 133-137 (WSNET), 143-147 (WSNHS), 148-152 (WNTQT), 153-157 (WCTQS), 158-162 (WNNQA), and 163-167 (WNSPF). The tract at residues 123–167 (WSNQTWNNSIWSNETQNIQSWSNHSWNTQTWCTQSWNNQAWNSPF) is 8 X repeats starting with a Trp in each unit. The interval 123 to 167 (WSNQTWNNSIWSNETQNIQSWSNHSWNTQTWCTQSWNNQAWNSPF) is sufficient for transactivation activity. Residues 168–232 (YNCGEESLQS…YSTNMQPEDV (65 aa)) are sufficient for strong transactivation activity.

The protein belongs to the Nanog homeobox family.

It localises to the nucleus. Its function is as follows. Probable transcriptional regulator. The chain is Putative homeobox protein NANOG2 (NANOGP1) from Pan troglodytes (Chimpanzee).